Consider the following 817-residue polypeptide: MSFKKSLKMGENLASESDLLSMISEYLKFGEFEETARTFEKEVKRKGKPALKSAGASRRDSKIISIYEDFLSSFNDGDYKVFSELWAKNIPPEIRDFDPVAQKLEFYLQIHFTIYPLKSPLGSHDKAEFDSRITHFRHYLETRGAALSQTTEFLPFYALPFVPNPMVHPSFQELFQDSWMPDLRDRMEKFLTVTLKASNTPRLLALYNDAGKGNKEAIQQMQLQLTEAERKSAVHIRRFAKLQADHHNLIGVTAELVDSLEATVRGKMISPEYLQGVCVRLFSGNMRQSAAQSLDFTRPGTASSMLRASVAPQRPKDVPLLPSLDYEKLKKDLLTGSDRLKALLLQALRWRLTRSLHGEQRDTVLQAFISNDLLERYSNKQKTVLHLIKCKNEIVRQYTARLINAFASLCDGRLYLSQIPALLPFLLDCLKTEEKESVTRENVLAALQKLSLRRAQQSAMIRDGLIGWLVKELNDSDCLSDYTLEYAISLLMNLCLRTQGKKRCAEEAKYVLKVLTELLGHENHEIRYYVNGALYSILSVPEIREEAKQMSMEEILRCYNKEENPELNRQIEFIIKQLNSATIPEQEPESDDEEDEDDDDDEEDVMEADLDKEEVLQPQPKELSGESLLTTEYLGIMTNMMKTKRRSCPPSSRSIDEPLQRPVTPSSHKNTIAGGEGVYPVTRQRSEDSRFSSRPATRTGSRPSTAESIHQTLATDSDCWRSSVESGLMGSPERHVPAPGQTTNSVQSYSGHMVGFASRPKIPRTPDSDAGSAGRSRLPPLAPQFSNSEPQQSGSRPGSAGGSSGRPSQQSSQSNRK.

The LisH domain maps to S15 to G47. Disordered stretches follow at residues S580–V605, L610–L629, and K642–K817. Residues Q586 to V605 show a composition bias toward acidic residues. Polar residues-rich tracts occupy residues S692 to T715 and G740 to S750. Residues G805–K817 show a composition bias toward low complexity.

As to expression, expressed in multiple CNS regions, including the cerebellum, all periventricular regions, and all layers of the retina.

It is found in the cytoplasm. It localises to the cytoskeleton. Its subcellular location is the cilium basal body. The protein localises to the cell projection. The protein resides in the cilium. It is found in the microtubule organizing center. It localises to the centrosome. Its subcellular location is the centriole. Its function is as follows. Involved in ciliogenesis. It is required for appropriate acetylation and polyglutamylation of ciliary microtubules, and regulation of cilium length. Acts as a positive regulator of hedgehog (Hh) signaling. The chain is LisH domain-containing protein ARMC9 (armc9) from Danio rerio (Zebrafish).